Consider the following 579-residue polypeptide: Protein disulfide isomerase-like 1-3 (579 aa).

The signal sequence occupies residues 1 to 25 (MASSSTSISLLLFVSFILLLVNSRA). A glycan (N-linked (GlcNAc...) asparagine) is linked at Asn27. 2 stretches are compositionally biased toward basic and acidic residues: residues 44–69 (EESK…RDFE) and 80–89 (EFHHGDHGYE). The disordered stretch occupies residues 44–91 (EESKEQSHGGGSYHEEEHDHQHRDFENYDDLEQGGGEFHHGDHGYEEE). A Thioredoxin 1 domain is found at 81–204 (FHHGDHGYEE…IVTWLKKKAS (124 aa)). 2 N-linked (GlcNAc...) asparagine glycosylation sites follow: Asn108 and Asn115. Catalysis depends on nucleophile residues Cys128 and Cys131. A disulfide bridge connects residues Cys128 and Cys131. Asn209, Asn293, Asn313, and Asn338 each carry an N-linked (GlcNAc...) asparagine glycan. The Thioredoxin 2 domain maps to 416–546 (DFLADKLKPF…LYKFLKKHAS (131 aa)). Active-site nucleophile residues include Cys467 and Cys470. A disulfide bridge links Cys467 with Cys470. The N-linked (GlcNAc...) asparagine glycan is linked to Asn520. The tract at residues 558–579 (EPVISTMKSDEKIEGDSSKDEL) is disordered. The segment covering 565–579 (KSDEKIEGDSSKDEL) has biased composition (basic and acidic residues). The Prevents secretion from ER motif lies at 576-579 (KDEL).

The protein belongs to the protein disulfide isomerase family. As to expression, widely expressed.

It is found in the endoplasmic reticulum lumen. It catalyses the reaction Catalyzes the rearrangement of -S-S- bonds in proteins.. Its function is as follows. Acts as a protein-folding catalyst that interacts with nascent polypeptides to catalyze the formation, isomerization, and reduction or oxidation of disulfide bonds. The chain is Protein disulfide isomerase-like 1-3 (PDIL1-3) from Arabidopsis thaliana (Mouse-ear cress).